A 255-amino-acid chain; its full sequence is Flap endonuclease Xni (255 aa).

Aspartate 105 lines the Mg(2+) pocket. The 93-residue stretch at 162–254 (EHKQFIDYLA…LKQFRLPKAN (93 aa)) folds into the 5'-3' exonuclease domain. Residues leucine 172, alanine 173, proline 181, valine 183, and isoleucine 186 each coordinate K(+). The segment at 185-190 (GIGPKS) is interaction with DNA.

This sequence belongs to the Xni family. Requires Mg(2+) as cofactor. It depends on K(+) as a cofactor.

In terms of biological role, has flap endonuclease activity. During DNA replication, flap endonucleases cleave the 5'-overhanging flap structure that is generated by displacement synthesis when DNA polymerase encounters the 5'-end of a downstream Okazaki fragment. This Shewanella piezotolerans (strain WP3 / JCM 13877) protein is Flap endonuclease Xni.